A 1024-amino-acid chain; its full sequence is Isoleucine--tRNA ligase (1024 aa).

The 'HIGH' region motif lies at 52–62 (PTANGRPHVGH). The short motif at 590 to 594 (KMSKS) is the 'KMSKS' region element. Lys-593 provides a ligand contact to ATP.

Belongs to the class-I aminoacyl-tRNA synthetase family. IleS type 2 subfamily. In terms of assembly, monomer. It depends on Zn(2+) as a cofactor.

It is found in the cytoplasm. It catalyses the reaction tRNA(Ile) + L-isoleucine + ATP = L-isoleucyl-tRNA(Ile) + AMP + diphosphate. Catalyzes the attachment of isoleucine to tRNA(Ile). As IleRS can inadvertently accommodate and process structurally similar amino acids such as valine, to avoid such errors it has two additional distinct tRNA(Ile)-dependent editing activities. One activity is designated as 'pretransfer' editing and involves the hydrolysis of activated Val-AMP. The other activity is designated 'posttransfer' editing and involves deacylation of mischarged Val-tRNA(Ile). The protein is Isoleucine--tRNA ligase of Picrophilus torridus (strain ATCC 700027 / DSM 9790 / JCM 10055 / NBRC 100828 / KAW 2/3).